The sequence spans 466 residues: 3-isopropylmalate dehydratase large subunit (466 aa).

[4Fe-4S] cluster contacts are provided by Cys346, Cys406, and Cys409.

It belongs to the aconitase/IPM isomerase family. LeuC type 1 subfamily. In terms of assembly, heterodimer of LeuC and LeuD. Requires [4Fe-4S] cluster as cofactor.

It carries out the reaction (2R,3S)-3-isopropylmalate = (2S)-2-isopropylmalate. It functions in the pathway amino-acid biosynthesis; L-leucine biosynthesis; L-leucine from 3-methyl-2-oxobutanoate: step 2/4. Its function is as follows. Catalyzes the isomerization between 2-isopropylmalate and 3-isopropylmalate, via the formation of 2-isopropylmaleate. The chain is 3-isopropylmalate dehydratase large subunit from Alteromonas mediterranea (strain DSM 17117 / CIP 110805 / LMG 28347 / Deep ecotype).